A 76-amino-acid polypeptide reads, in one-letter code: Small ribosomal subunit protein bS18 (76 aa).

It belongs to the bacterial ribosomal protein bS18 family. As to quaternary structure, part of the 30S ribosomal subunit. Forms a tight heterodimer with protein bS6.

In terms of biological role, binds as a heterodimer with protein bS6 to the central domain of the 16S rRNA, where it helps stabilize the platform of the 30S subunit. The protein is Small ribosomal subunit protein bS18 of Oceanobacillus iheyensis (strain DSM 14371 / CIP 107618 / JCM 11309 / KCTC 3954 / HTE831).